A 356-amino-acid polypeptide reads, in one-letter code: Guanine nucleotide-binding protein alpha-2 subunit (356 aa).

A lipid anchor (N-myristoyl glycine) is attached at Gly-2. Cys-4 carries S-palmitoyl cysteine lipidation. One can recognise a G-alpha domain in the interval 35–356; it reads REVKLLLLGA…LTNNLRDIVL (322 aa). Residues 38 to 51 are G1 motif; that stretch reads KLLLLGAGESGKST. GTP contacts are provided by Glu-46, Ser-47, Gly-48, Lys-49, Ser-50, Thr-51, Asp-153, Leu-178, Thr-184, Gly-206, Asn-272, Lys-273, Asp-275, and Ala-329. Ser-50 is a Mg(2+) binding site. The segment at 176–184 is G2 motif; sequence DILRCRNKT. Thr-184 is a Mg(2+) binding site. The segment at 199–208 is G3 motif; the sequence is YRIFDVGGQR. Positions 268 to 275 are G4 motif; it reads ILFLNKVD. Residues 327 to 332 form a G5 motif region; the sequence is TNATDV.

This sequence belongs to the G-alpha family. G proteins are composed of 3 units; alpha, beta and gamma. The alpha chain contains the guanine nucleotide binding site. Requires Mg(2+) as cofactor.

In terms of biological role, guanine nucleotide-binding proteins (G proteins) are involved as modulators or transducers in various transmembrane signaling systems. This is Guanine nucleotide-binding protein alpha-2 subunit (GPA2) from Mycosarcoma maydis (Corn smut fungus).